We begin with the raw amino-acid sequence, 616 residues long: Chaperone protein HscA (616 aa).

This sequence belongs to the heat shock protein 70 family.

Functionally, chaperone involved in the maturation of iron-sulfur cluster-containing proteins. Has a low intrinsic ATPase activity which is markedly stimulated by HscB. Involved in the maturation of IscU. The polypeptide is Chaperone protein HscA (Salmonella enteritidis PT4 (strain P125109)).